A 625-amino-acid chain; its full sequence is Probable potassium transport system protein Kup (625 aa).

The next 12 membrane-spanning stretches (helical) occupy residues 13 to 33 (TALA…LYAL), 53 to 73 (ILSI…VAIV), 103 to 123 (IYMI…GIIT), 141 to 161 (VFDP…FLVQ), 172 to 192 (FGPI…HSVI), 206 to 226 (AIQF…AVVL), 250 to 270 (WFFV…ALLL), 282 to 302 (LLVP…ATVI), 340 to 360 (IYVP…ILIF), 369 to 389 (AYGL…AVFI), 400 to 420 (VLLL…ATSL), and 422 to 442 (ILSG…ILMT).

It belongs to the HAK/KUP transporter (TC 2.A.72) family.

The protein localises to the cell inner membrane. The enzyme catalyses K(+)(in) + H(+)(in) = K(+)(out) + H(+)(out). Functionally, transport of potassium into the cell. Likely operates as a K(+):H(+) symporter. The protein is Probable potassium transport system protein Kup of Acinetobacter baumannii (strain AYE).